Reading from the N-terminus, the 417-residue chain is GTP-binding protein YPT11 (417 aa).

The segment at Met1–Glu34 is disordered. GTP-binding positions include Gly97–Thr104, Asp228–Gln232, and Asn292–Asp295. S-geranylgeranyl cysteine attachment occurs at residues Cys415 and Cys416.

The protein belongs to the small GTPase superfamily. Rab family. As to quaternary structure, interacts with MYO2 (via C-terminal tail domain). Interacts with YIF1, YIP3, YIP4 and YIP5.

The protein localises to the endoplasmic reticulum membrane. Its subcellular location is the bud tip. It is found in the bud neck. Its function is as follows. Involved in the positive control of both endoplasmic reticulum (ER) and mitochondrion inheritance during cell divison. Required for the MYO2-dependent retention of newly inherited mitochondria at the bud tip in developing daughter cells. This Saccharomyces cerevisiae (strain AWRI1631) (Baker's yeast) protein is GTP-binding protein YPT11 (YPT11).